Consider the following 79-residue polypeptide: Acyl carrier protein 1 (79 aa).

One can recognise a Carrier domain in the interval 2-77; the sequence is DNIEQRVKKI…QAIDYARANV (76 aa). Position 37 is an O-(pantetheine 4'-phosphoryl)serine (Ser-37).

This sequence belongs to the acyl carrier protein (ACP) family. Post-translationally, 4'-phosphopantetheine is transferred from CoA to a specific serine of apo-ACP by AcpS. This modification is essential for activity because fatty acids are bound in thioester linkage to the sulfhydryl of the prosthetic group.

Its subcellular location is the cytoplasm. It functions in the pathway lipid metabolism; fatty acid biosynthesis. Functionally, carrier of the growing fatty acid chain in fatty acid biosynthesis. This chain is Acyl carrier protein 1, found in Ralstonia nicotianae (strain ATCC BAA-1114 / GMI1000) (Ralstonia solanacearum).